Consider the following 425-residue polypeptide: Enolase (425 aa).

Glutamine 163 contacts (2R)-2-phosphoglycerate. The active-site Proton donor is glutamate 205. Positions 242, 285, and 312 each coordinate Mg(2+). Lysine 337, arginine 366, serine 367, and lysine 388 together coordinate (2R)-2-phosphoglycerate. The active-site Proton acceptor is lysine 337.

Belongs to the enolase family. Mg(2+) is required as a cofactor.

It localises to the cytoplasm. It is found in the secreted. The protein localises to the cell surface. The enzyme catalyses (2R)-2-phosphoglycerate = phosphoenolpyruvate + H2O. Its pathway is carbohydrate degradation; glycolysis; pyruvate from D-glyceraldehyde 3-phosphate: step 4/5. Functionally, catalyzes the reversible conversion of 2-phosphoglycerate (2-PG) into phosphoenolpyruvate (PEP). It is essential for the degradation of carbohydrates via glycolysis. The polypeptide is Enolase (Ruegeria pomeroyi (strain ATCC 700808 / DSM 15171 / DSS-3) (Silicibacter pomeroyi)).